Reading from the N-terminus, the 433-residue chain is 23S rRNA (uracil(1939)-C(5))-methyltransferase RlmD (433 aa).

Residues 10-68 (RTTTRQIITVSVNDLDSFGQGVARHNGKTLFIPGLLPQENAEVTVTEDKKQYARAKVVR) enclose the TRAM domain. Positions 81, 87, 90, and 162 each coordinate [4Fe-4S] cluster. 6 residues coordinate S-adenosyl-L-methionine: Gln-265, Phe-294, Asn-299, Glu-315, Asn-342, and Asp-363. The Nucleophile role is filled by Cys-389.

Belongs to the class I-like SAM-binding methyltransferase superfamily. RNA M5U methyltransferase family. RlmD subfamily.

It catalyses the reaction uridine(1939) in 23S rRNA + S-adenosyl-L-methionine = 5-methyluridine(1939) in 23S rRNA + S-adenosyl-L-homocysteine + H(+). Its function is as follows. Catalyzes the formation of 5-methyl-uridine at position 1939 (m5U1939) in 23S rRNA. This is 23S rRNA (uracil(1939)-C(5))-methyltransferase RlmD from Escherichia coli O6:K15:H31 (strain 536 / UPEC).